The sequence spans 317 residues: Taste receptor type 2 member 14 (317 aa).

At 1-7 (MGGVIKS) the chain is on the extracellular side. The chain crosses the membrane as a helical span at residues 8–28 (IFTFVLIVEFIIGNLGNSFIA). Residues 29–55 (LVNCIDWVKGRKISSVDRILTALAISR) are Cytoplasmic-facing. A helical membrane pass occupies residues 56–76 (ISLVWLIFGSWCVSVFFPALF). Residues 77 to 87 (ATEKMFRMLTN) lie on the Extracellular side of the membrane. Cholesterol-binding residues include threonine 86 and tryptophan 89. The chain crosses the membrane as a helical span at residues 88-108 (IWTVINHFSVWLATGLGTFYF). At 109 to 129 (LKIANFSNSIFLYLKWRVKKV) the chain is on the cytoplasmic side. The chain crosses the membrane as a helical span at residues 130-150 (VLVLLLVTSVFLFLNIALINI). Residues 151–184 (HINASINGYRRNKTCSSDSSNFTRFSSLIVLTST) are Extracellular-facing. Asparagine 153, asparagine 162, and asparagine 171 each carry an N-linked (GlcNAc...) asparagine glycan. Valine 180 serves as a coordination point for cholesterol. The chain crosses the membrane as a helical span at residues 185–205 (VFIFIPFTLSLAMFLLLIFSM). Over 206-232 (WKHRKKMQHTVKISGDASTKAHRGVKS) the chain is Cytoplasmic. Residues 233 to 253 (VITFFLLYAIFSLSFFISVWT) traverse the membrane as a helical segment. Topologically, residues 254–261 (SERLEENL) are extracellular. Residues 262–282 (IILSQVMGMAYPSCHSCVLIL) form a helical membrane-spanning segment. 2 residues coordinate cholesterol: serine 265 and methionine 268. Over 283-317 (GNKKLRQASLSVLLWLRYMFKDGEPSGHKEFRESS) the chain is Cytoplasmic.

This sequence belongs to the G-protein coupled receptor T2R family. In terms of assembly, core component of the TAS2R14-GNAI1 complex, consisting of TAS2R14, GNAI1, GNB1 and GNG2; within the complex interacts with GNAI1. Core component of the TAS2R14-GNAT3 complex, consisting of TAS2R14, GNAT3, GNB1 and GNG2; within the complex interacts with GNAT3. Core component of the TAS2R14-GNAS2 complex, consisting of TAS2R14, GNAS2, GNB1 and GNG2; within the complex interacts with GNAS2. In terms of tissue distribution, highly expressed in cerebellum, pancreas, small intestine and thymus; also expressed in adipose, aorta, skin and tongue, but at significantly lower levels. Expressed in subsets of taste receptor cells of the tongue and palate epithelium and exclusively in gustducin-positive cells. Expressed in testis.

The protein localises to the membrane. The enzyme catalyses Ca(2+)(in) = Ca(2+)(out). The catalysed reaction is 3',5'-cyclic AMP(in) = 3',5'-cyclic AMP(out). Basal activity is enhanced by binding to bitter tastants, such as flufenamic acid and aristolochic acid. Regulated by cholesterol in a concentration-dependent manner. Its function is as follows. Gustducin-linked G-protein coupled receptor that plays a role in the perception of bitterness. The activity of this receptor stimulates GNAT3, activating the gustducin G-protein pathway. Likely plays a role in sensing the chemical composition of the gastrointestinal content and other extra-oral tissues via the inhibitory G-protein pathways. The polypeptide is Taste receptor type 2 member 14 (TAS2R14) (Homo sapiens (Human)).